The chain runs to 156 residues: Small ribosomal subunit protein uS7 (156 aa).

The protein belongs to the universal ribosomal protein uS7 family. In terms of assembly, part of the 30S ribosomal subunit. Contacts proteins S9 and S11.

Its function is as follows. One of the primary rRNA binding proteins, it binds directly to 16S rRNA where it nucleates assembly of the head domain of the 30S subunit. Is located at the subunit interface close to the decoding center, probably blocks exit of the E-site tRNA. The polypeptide is Small ribosomal subunit protein uS7 (Sodalis glossinidius (strain morsitans)).